A 106-amino-acid chain; its full sequence is MMGNKLTLPAELPDEQDLRAVLAYNMRLFRVNKGWSQEELARQCGLDRTYVSAVERKRWNIALSNIEKMAAALGVAAYQLLLPPQERLKLMTNSADTRQMPSESGI.

The HTH cro/C1-type domain maps to 26-80; it reads MRLFRVNKGWSQEELARQCGLDRTYVSAVERKRWNIALSNIEKMAAALGVAAYQL. The H-T-H motif DNA-binding region spans 37–56; the sequence is QEELARQCGLDRTYVSAVER.

In terms of assembly, homodimer. Can interact with the dimeric form of the DNA mimic protein DMP19 with 1:1 stoichiometry.

Its subcellular location is the cytoplasm. Repressor activity is inhibited in the presence of the DNA mimic protein DMP19, which interacts with NHTF and prevents binding of NHTF to its DNA-binding sites. Its function is as follows. Transcriptional regulator probably involved in the response to nitrogen levels. Down-regulates its own expression as well as the expression of the downstream gene, glnD, which encodes the [Protein-PII] uridylyltransferase, a key enzyme in the nitrogen regulation system. Acts by binding to a specific palindromic DNA sequence (5'-TGTNANTNACA-3') in its 5'-untranslated region. The polypeptide is Neisseria hypothetical transcription factor (Neisseria meningitidis serogroup B (strain ATCC BAA-335 / MC58)).